Consider the following 279-residue polypeptide: Phenylalanine 3-hydroxylase (279 aa).

The Fe cation site is built by histidine 140, histidine 145, and glutamate 186.

The protein belongs to the biopterin-dependent aromatic amino acid hydroxylase family. Fe(2+) serves as cofactor.

It carries out the reaction (6R)-L-erythro-5,6,7,8-tetrahydrobiopterin + L-phenylalanine + O2 = 3-hydroxy-L-phenylalanine + (4aS,6R)-4a-hydroxy-L-erythro-5,6,7,8-tetrahydrobiopterin. In vitro, catalyzes the highly regiospecific C-3 hydroxylation of L-phenylalanine (L-Phe) to yield 3-hydroxy-L-phenylalanine (meta-Tyr), an amino acid found in bacterial secondary metabolites such as sanglifehrin A and some pacidamycins. Tetrahydrobiopterin (BH4) seems to be the physiological pterin, however the hydroxylase is also able to use 6-methyltetrahydropterin (6-MePH4). This is Phenylalanine 3-hydroxylase from Streptomyces coeruleorubidus.